We begin with the raw amino-acid sequence, 164 residues long: N5-carboxyaminoimidazole ribonucleotide mutase (164 aa).

Substrate-binding residues include serine 13, aspartate 16, and arginine 43.

Belongs to the AIR carboxylase family. Class I subfamily.

The catalysed reaction is 5-carboxyamino-1-(5-phospho-D-ribosyl)imidazole + H(+) = 5-amino-1-(5-phospho-D-ribosyl)imidazole-4-carboxylate. It participates in purine metabolism; IMP biosynthesis via de novo pathway; 5-amino-1-(5-phospho-D-ribosyl)imidazole-4-carboxylate from 5-amino-1-(5-phospho-D-ribosyl)imidazole (N5-CAIR route): step 2/2. Its function is as follows. Catalyzes the conversion of N5-carboxyaminoimidazole ribonucleotide (N5-CAIR) to 4-carboxy-5-aminoimidazole ribonucleotide (CAIR). The sequence is that of N5-carboxyaminoimidazole ribonucleotide mutase from Haemophilus influenzae (strain ATCC 51907 / DSM 11121 / KW20 / Rd).